Here is a 268-residue protein sequence, read N- to C-terminus: Large ribosomal subunit protein bL9m (268 aa).

A mitochondrion-targeting transit peptide spans Met1–Gly52.

This sequence belongs to the bacterial ribosomal protein bL9 family. Component of the mitochondrial ribosome large subunit (39S) which comprises a 16S rRNA and about 50 distinct proteins.

It localises to the mitochondrion. The protein is Large ribosomal subunit protein bL9m (MRPL9) of Bos taurus (Bovine).